A 253-amino-acid chain; its full sequence is Phosphate import ATP-binding protein PstB (253 aa).

The region spanning 7–248 is the ABC transporter domain; that stretch reads MHSKGLDFFY…PGNKQTEDYI (242 aa). 39-46 contributes to the ATP binding site; it reads GPSGCGKS.

The protein belongs to the ABC transporter superfamily. Phosphate importer (TC 3.A.1.7) family. As to quaternary structure, the complex is composed of two ATP-binding proteins (PstB), two transmembrane proteins (PstC and PstA) and a solute-binding protein (PstS).

It is found in the cell inner membrane. It catalyses the reaction phosphate(out) + ATP + H2O = ADP + 2 phosphate(in) + H(+). Functionally, part of the ABC transporter complex PstSACB involved in phosphate import. Responsible for energy coupling to the transport system. The protein is Phosphate import ATP-binding protein PstB of Oleidesulfovibrio alaskensis (strain ATCC BAA-1058 / DSM 17464 / G20) (Desulfovibrio alaskensis).